The sequence spans 782 residues: Endonuclease MutS2 (782 aa).

336-343 (GPNTGGKT) serves as a coordination point for ATP. The region spanning 707–782 (LDLRGYRYED…GFGVTVATLK (76 aa)) is the Smr domain.

The protein belongs to the DNA mismatch repair MutS family. MutS2 subfamily. In terms of assembly, homodimer. Binds to stalled ribosomes, contacting rRNA.

Functionally, endonuclease that is involved in the suppression of homologous recombination and thus may have a key role in the control of bacterial genetic diversity. Acts as a ribosome collision sensor, splitting the ribosome into its 2 subunits. Detects stalled/collided 70S ribosomes which it binds and splits by an ATP-hydrolysis driven conformational change. Acts upstream of the ribosome quality control system (RQC), a ribosome-associated complex that mediates the extraction of incompletely synthesized nascent chains from stalled ribosomes and their subsequent degradation. Probably generates substrates for RQC. This Staphylococcus aureus (strain MSSA476) protein is Endonuclease MutS2.